The chain runs to 585 residues: Clathrin heavy chain linker domain-containing protein 1 (585 aa).

Positions 118 to 239 (QLEAKMRIID…DLRFRHQRLQ (122 aa)) form a coiled coil.

The protein is Clathrin heavy chain linker domain-containing protein 1 (Clhc1) of Rattus norvegicus (Rat).